A 292-amino-acid polypeptide reads, in one-letter code: Leucine-rich repeat-containing protein 10B (292 aa).

Positions 1–20 are disordered; it reads MGIAESTPDELPSDAEEQLR. The segment covering 7 to 16 has biased composition (acidic residues); that stretch reads TPDELPSDAE. LRR repeat units follow at residues 22–43, 45–66, 68–90, 91–112, 114–136, 137–158, 160–181, 183–204, and 205–226; these read GDQQ…VCAL, RLQK…IEEL, ELRI…CRLP, RLTR…FAQL, SLRC…LRLV, ALQS…LPRM, GLRG…LLRM, RLHI…HPLR, and ALRV…ADTV. A disordered region spans residues 236 to 261; it reads RMAERDEPTPRPPPRRPARAFEDEEE.

The sequence is that of Leucine-rich repeat-containing protein 10B (LRRC10B) from Homo sapiens (Human).